Consider the following 67-residue polypeptide: Large ribosomal subunit protein bL32 (67 aa).

Positions 1–19 are enriched in basic residues; it reads MAVPKRKQSRANTHARRSQ. A disordered region spans residues 1–20; sequence MAVPKRKQSRANTHARRSQW.

Belongs to the bacterial ribosomal protein bL32 family.

The protein is Large ribosomal subunit protein bL32 of Leifsonia xyli subsp. xyli (strain CTCB07).